We begin with the raw amino-acid sequence, 1083 residues long: Carbamoyl phosphate synthase large chain (1083 aa).

The segment at 1–402 (MPKRTDIRKV…AYMKALRSME (402 aa)) is carboxyphosphate synthetic domain. ATP-binding residues include Arg-129, Arg-169, Gly-175, Gly-176, Glu-208, Val-210, Glu-215, Gly-241, Val-242, His-243, Gln-285, and Glu-299. The ATP-grasp 1 domain maps to 133–328 (KAAMQKIGVA…IAKIAAKLAL (196 aa)). Positions 285, 299, and 301 each coordinate Mg(2+). Mn(2+) is bound by residues Gln-285, Glu-299, and Asn-301. Positions 403–554 (LGRVGLESPE…YSTYEEEDEA (152 aa)) are oligomerization domain. Residues 555-937 (PPTDRQKVLI…AFAKSQLAAG (383 aa)) are carbamoyl phosphate synthetic domain. Residues 679-871 (AALIEKLGLK…MAKIAALCMV (193 aa)) form the ATP-grasp 2 domain. Residues Arg-715, Arg-754, Leu-756, Glu-761, Gly-787, Val-788, His-789, Ser-790, Gln-830, and Glu-842 each contribute to the ATP site. Positions 830, 842, and 844 each coordinate Mg(2+). Mn(2+) contacts are provided by Gln-830, Glu-842, and Asn-844. In terms of domain architecture, MGS-like spans 938 to 1078 (VKLPKSGKVF…QEYLGINAAP (141 aa)). Residues 938 to 1083 (VKLPKSGKVF…INAAPPGTRR (146 aa)) form an allosteric domain region.

Belongs to the CarB family. In terms of assembly, composed of two chains; the small (or glutamine) chain promotes the hydrolysis of glutamine to ammonia, which is used by the large (or ammonia) chain to synthesize carbamoyl phosphate. Tetramer of heterodimers (alpha,beta)4. It depends on Mg(2+) as a cofactor. Mn(2+) is required as a cofactor.

It carries out the reaction hydrogencarbonate + L-glutamine + 2 ATP + H2O = carbamoyl phosphate + L-glutamate + 2 ADP + phosphate + 2 H(+). The catalysed reaction is hydrogencarbonate + NH4(+) + 2 ATP = carbamoyl phosphate + 2 ADP + phosphate + 2 H(+). It functions in the pathway amino-acid biosynthesis; L-arginine biosynthesis; carbamoyl phosphate from bicarbonate: step 1/1. It participates in pyrimidine metabolism; UMP biosynthesis via de novo pathway; (S)-dihydroorotate from bicarbonate: step 1/3. Its function is as follows. Large subunit of the glutamine-dependent carbamoyl phosphate synthetase (CPSase). CPSase catalyzes the formation of carbamoyl phosphate from the ammonia moiety of glutamine, carbonate, and phosphate donated by ATP, constituting the first step of 2 biosynthetic pathways, one leading to arginine and/or urea and the other to pyrimidine nucleotides. The large subunit (synthetase) binds the substrates ammonia (free or transferred from glutamine from the small subunit), hydrogencarbonate and ATP and carries out an ATP-coupled ligase reaction, activating hydrogencarbonate by forming carboxy phosphate which reacts with ammonia to form carbamoyl phosphate. This is Carbamoyl phosphate synthase large chain from Myxococcus xanthus (strain DK1622).